A 104-amino-acid polypeptide reads, in one-letter code: UPF0213 protein PA3854 (104 aa).

Residues 13–88 (KCWSVYLVRA…KALSKRAKER (76 aa)) enclose the GIY-YIG domain.

This sequence belongs to the UPF0213 family.

This chain is UPF0213 protein PA3854, found in Pseudomonas aeruginosa (strain ATCC 15692 / DSM 22644 / CIP 104116 / JCM 14847 / LMG 12228 / 1C / PRS 101 / PAO1).